The sequence spans 207 residues: Ciliary microtubule-associated protein 3 (207 aa).

As to quaternary structure, interacts with proteins involved in ciliary transport, including ARL13B, CETN1, KIF3A, RAB6A, RAB8A, TUBB1 and TUBG1. Interacts with AURKA. In terms of tissue distribution, expressed in tissues rich in ciliated cells, such as lung, kidney, vas deferens and testis. Both isoforms 1 and 2 are expressed in testis.

It is found in the golgi apparatus. It localises to the golgi stack. The protein resides in the trans-Golgi network. Its subcellular location is the nucleus. The protein localises to the cytoplasm. It is found in the cytoplasmic vesicle. Its function is as follows. During primary cilia disassembly, involved in cilia disassembly. Required specifically to control cilia retraction as well as the liberation and duplication of the basal body/centrosome. May act by stimulating AURKA activity at the basal body in a cell cycle-dependent manner. This is Ciliary microtubule-associated protein 3 (Cimap3) from Mus musculus (Mouse).